A 325-amino-acid chain; its full sequence is UPF0285 protein MmarC5_0962 (325 aa).

It belongs to the UPF0285 family.

The polypeptide is UPF0285 protein MmarC5_0962 (Methanococcus maripaludis (strain C5 / ATCC BAA-1333)).